Reading from the N-terminus, the 497-residue chain is uncharacterized protein (497 aa).

The segment at 474-497 is disordered; that stretch reads DPRNPFSNGKPSGWSDEDVAWLKR. The segment covering 488–497 has biased composition (acidic residues); that stretch reads SDEDVAWLKR.

This is an uncharacterized protein from Bacillus anthracis.